A 168-amino-acid polypeptide reads, in one-letter code: Tyrosine-protein phosphatase (168 aa).

Residues Phe24 to Ile168 form the Tyrosine-protein phosphatase domain. Residue Cys119 is the Phosphocysteine intermediate of the active site.

Belongs to the protein-tyrosine phosphatase family. Non-receptor class CDC14 subfamily.

The enzyme catalyses O-phospho-L-tyrosyl-[protein] + H2O = L-tyrosyl-[protein] + phosphate. Its function is as follows. Plays a role in the regulation and processing of late viral mRNAs by displaying RNA 5'-triphosphatase and diphosphatase activities. In Autographa californica nuclear polyhedrosis virus (AcMNPV), this protein is Tyrosine-protein phosphatase (PTP).